Consider the following 168-residue polypeptide: Shikimate kinase (168 aa).

Position 10-15 (10-15) interacts with ATP; the sequence is CSGKST. S14 is a Mg(2+) binding site. D32, R56, and G78 together coordinate substrate. Position 116 (R116) interacts with ATP. R133 contributes to the substrate binding site.

Belongs to the shikimate kinase family. As to quaternary structure, monomer. Requires Mg(2+) as cofactor.

The protein resides in the cytoplasm. It carries out the reaction shikimate + ATP = 3-phosphoshikimate + ADP + H(+). The protein operates within metabolic intermediate biosynthesis; chorismate biosynthesis; chorismate from D-erythrose 4-phosphate and phosphoenolpyruvate: step 5/7. Functionally, catalyzes the specific phosphorylation of the 3-hydroxyl group of shikimic acid using ATP as a cosubstrate. This chain is Shikimate kinase, found in Aquifex aeolicus (strain VF5).